Reading from the N-terminus, the 901-residue chain is HTH-type transcriptional regulator MalT (901 aa).

39 to 46 provides a ligand contact to ATP; it reads SPAGYGKT. The HTH luxR-type domain maps to 829–894; it reads ELIRTSPLTQ…AAVQHAQKLL (66 aa). Residues 853 to 872 constitute a DNA-binding region (H-T-H motif); sequence NEQIAGELEVAATTIKTHIR.

Belongs to the MalT family. In terms of assembly, monomer in solution. Oligomerizes to an active state in the presence of the positive effectors ATP and maltotriose.

With respect to regulation, activated by ATP and maltotriose, which are both required for DNA binding. In terms of biological role, positively regulates the transcription of the maltose regulon whose gene products are responsible for uptake and catabolism of malto-oligosaccharides. Specifically binds to the promoter region of its target genes, recognizing a short DNA motif called the MalT box. The chain is HTH-type transcriptional regulator MalT from Shigella boydii serotype 4 (strain Sb227).